Reading from the N-terminus, the 250-residue chain is Small ribosomal subunit protein uS3 (250 aa).

One can recognise a KH type-2 domain in the interval 16–85 (IDEYLEKELE…NPQIEVKEVS (70 aa)).

This sequence belongs to the universal ribosomal protein uS3 family. Part of the 30S ribosomal subunit.

Binds the lower part of the 30S subunit head. The protein is Small ribosomal subunit protein uS3 of Methanobrevibacter smithii (strain ATCC 35061 / DSM 861 / OCM 144 / PS).